The primary structure comprises 394 residues: Glycerol-1-phosphate dehydrogenase [NAD(P)+] (394 aa).

Residues D54, 116-120 (GTIHD), and 138-141 (TAPS) each bind NAD(+). D143 is a binding site for substrate. An NAD(+)-binding site is contributed by S147. D190 lines the substrate pocket. Positions 190 and 270 each coordinate Ni(2+). H274 lines the substrate pocket. H290 serves as a coordination point for Ni(2+).

Belongs to the glycerol-1-phosphate dehydrogenase family. In terms of assembly, homodimer. The cofactor is Ni(2+).

Its subcellular location is the cytoplasm. The catalysed reaction is sn-glycerol 1-phosphate + NAD(+) = dihydroxyacetone phosphate + NADH + H(+). It carries out the reaction sn-glycerol 1-phosphate + NADP(+) = dihydroxyacetone phosphate + NADPH + H(+). In terms of biological role, catalyzes the NAD(P)H-dependent reduction of dihydroxyacetonephosphate (DHAP or glycerone phosphate) to glycerol 1-phosphate (G1P). The G1P thus generated is probably used for the synthesis of phosphoglycerolipids in Gram-positive bacterial species. The polypeptide is Glycerol-1-phosphate dehydrogenase [NAD(P)+] (Bacillus velezensis (strain DSM 23117 / BGSC 10A6 / LMG 26770 / FZB42) (Bacillus amyloliquefaciens subsp. plantarum)).